We begin with the raw amino-acid sequence, 132 residues long: NAD(P)H-quinone oxidoreductase subunit 3 (132 aa).

3 consecutive transmembrane segments (helical) span residues 22-42, 76-96, and 101-121; these read FLGF…ASAL, MFAL…PWAV, and LGLL…VALV.

It belongs to the complex I subunit 3 family. NDH-1 can be composed of about 15 different subunits; different subcomplexes with different compositions have been identified which probably have different functions.

It localises to the cellular thylakoid membrane. The enzyme catalyses a plastoquinone + NADH + (n+1) H(+)(in) = a plastoquinol + NAD(+) + n H(+)(out). The catalysed reaction is a plastoquinone + NADPH + (n+1) H(+)(in) = a plastoquinol + NADP(+) + n H(+)(out). In terms of biological role, NDH-1 shuttles electrons from an unknown electron donor, via FMN and iron-sulfur (Fe-S) centers, to quinones in the respiratory and/or the photosynthetic chain. The immediate electron acceptor for the enzyme in this species is believed to be plastoquinone. Couples the redox reaction to proton translocation, and thus conserves the redox energy in a proton gradient. Cyanobacterial NDH-1 also plays a role in inorganic carbon-concentration. The sequence is that of NAD(P)H-quinone oxidoreductase subunit 3 (ndhC) from Thermosynechococcus vestitus (strain NIES-2133 / IAM M-273 / BP-1).